The primary structure comprises 96 residues: Acylphosphatase (96 aa).

Residues Arg-4–Tyr-91 form the Acylphosphatase-like domain. Residues Arg-19 and Asn-37 contribute to the active site.

This sequence belongs to the acylphosphatase family.

The catalysed reaction is an acyl phosphate + H2O = a carboxylate + phosphate + H(+). This Syntrophus aciditrophicus (strain SB) protein is Acylphosphatase (acyP).